The following is a 160-amino-acid chain: Cyclic pyranopterin monophosphate synthase (160 aa).

Substrate is bound by residues 75-77 (LCH) and 113-114 (ME). Asp128 is an active-site residue.

It belongs to the MoaC family. Homohexamer; trimer of dimers.

It catalyses the reaction (8S)-3',8-cyclo-7,8-dihydroguanosine 5'-triphosphate = cyclic pyranopterin phosphate + diphosphate. The protein operates within cofactor biosynthesis; molybdopterin biosynthesis. Its function is as follows. Catalyzes the conversion of (8S)-3',8-cyclo-7,8-dihydroguanosine 5'-triphosphate to cyclic pyranopterin monophosphate (cPMP). This chain is Cyclic pyranopterin monophosphate synthase, found in Ruthia magnifica subsp. Calyptogena magnifica.